A 253-amino-acid polypeptide reads, in one-letter code: MTTIDLNCDLGESFGAYKMGNDDEILPFVSSINVACGFHAGDPSVMRQTVEKAMQHNVAIGAHPGFPDLIGFGRRNMNVPASEVYDYVLYQIGALDGFVKAAGGKMHHVKPHGALYNMAATNPEIADAIAKAIYHINPSLLLYGLANSEAFIQAAEKYNITLVQEAFADRTYKQDGTLTSRTEENALIKNEEEAIKQVLQMVKEGYVNSVNGQKVAVQAQTICLHGDGEKAVQFARRIYRTFENNEISICTPK.

The protein belongs to the LamB/PxpA family. As to quaternary structure, forms a complex composed of PxpA, PxpB and PxpC.

It catalyses the reaction 5-oxo-L-proline + ATP + 2 H2O = L-glutamate + ADP + phosphate + H(+). Catalyzes the cleavage of 5-oxoproline to form L-glutamate coupled to the hydrolysis of ATP to ADP and inorganic phosphate. This chain is 5-oxoprolinase subunit A, found in Bacillus cereus (strain Q1).